We begin with the raw amino-acid sequence, 822 residues long: Pentatricopeptide repeat-containing protein At2g41720 (822 aa).

The tract at residues 1-28 (MATVTNFKLVTPPESSRADKPGATKASD) is disordered. PPR repeat units follow at residues 106–136 (ARKN…MKIQ), 142–176 (RNDI…SCKP), 177–211 (DAET…AIAP), 212–246 (SRST…GVGP), 247–281 (DLVT…KVRP), 282–316 (DTTT…RAEC), 319–353 (DVVT…GLKP), 354–388 (NIVS…GIIP), 389–423 (DVVS…RRKP), 424–458 (NVVT…GIKP), 459–493 (NVVS…GINL), 494–528 (NTAA…KVKA), 529–563 (DSVT…SIPL), 564–598 (TKEV…GCEP), 599–633 (DVIA…GIEP), 634–668 (DSIA…EIPF), 669–699 (TGAV…MDPY), 704–738 (SIGL…GVGI), and 739–773 (NLKT…GIQP).

It belongs to the PPR family. P subfamily.

The sequence is that of Pentatricopeptide repeat-containing protein At2g41720 (EMB2654) from Arabidopsis thaliana (Mouse-ear cress).